Reading from the N-terminus, the 452-residue chain is tRNA(Ile)-lysidine synthase (452 aa).

27-32 (SGGIDS) is an ATP binding site.

The protein belongs to the tRNA(Ile)-lysidine synthase family.

It localises to the cytoplasm. The catalysed reaction is cytidine(34) in tRNA(Ile2) + L-lysine + ATP = lysidine(34) in tRNA(Ile2) + AMP + diphosphate + H(+). In terms of biological role, ligates lysine onto the cytidine present at position 34 of the AUA codon-specific tRNA(Ile) that contains the anticodon CAU, in an ATP-dependent manner. Cytidine is converted to lysidine, thus changing the amino acid specificity of the tRNA from methionine to isoleucine. This Persephonella marina (strain DSM 14350 / EX-H1) protein is tRNA(Ile)-lysidine synthase.